We begin with the raw amino-acid sequence, 222 residues long: Charged multivesicular body protein 4b (222 aa).

2 disordered regions span residues M1–Q21 and G183–A222. Residues Q21–Q182 are a coiled coil. Positions P188–K200 are enriched in low complexity.

Belongs to the SNF7 family. Probable core component of the endosomal sorting required for transport complex III (ESCRT-III). ESCRT-III components are thought to multimerize to form a flat lattice on the perimeter membrane of the endosome.

It localises to the cytoplasm. It is found in the cytosol. The protein localises to the late endosome membrane. Its subcellular location is the midbody. Its function is as follows. Probable core component of the endosomal sorting required for transport complex III (ESCRT-III) which is involved in multivesicular bodies (MVBs) formation and sorting of endosomal cargo proteins into MVBs. MVBs contain intraluminal vesicles (ILVs) that are generated by invagination and scission from the limiting membrane of the endosome and mostly are delivered to lysosomes enabling degradation of membrane proteins, such as stimulated growth factor receptors, lysosomal enzymes and lipids. This chain is Charged multivesicular body protein 4b (chmp4b), found in Xenopus tropicalis (Western clawed frog).